We begin with the raw amino-acid sequence, 75 residues long: Iota-conotoxin-like R11.3 (75 aa).

The first 19 residues, Met1–Gly19, serve as a signal peptide directing secretion. Positions Glu20–Asn34 are excised as a propeptide. 4 disulfide bridges follow: Cys39–Cys53, Cys46–Cys58, Cys52–Cys63, and Cys57–Cys70.

Belongs to the conotoxin I1 superfamily. As to expression, expressed by the venom duct.

The protein resides in the secreted. In terms of biological role, iota-conotoxins bind to voltage-gated sodium channels (Nav) and act as agonists by shifting the voltage-dependence of activation to more hyperpolarized levels. Produces general excitatory symptoms. The sequence is that of Iota-conotoxin-like R11.3 from Conus radiatus (Rayed cone).